The chain runs to 105 residues: uncharacterized protein (105 aa).

This is an uncharacterized protein from Escherichia coli (Bacteriophage T4).